We begin with the raw amino-acid sequence, 498 residues long: Probable cytosol aminopeptidase (498 aa).

The Mn(2+) site is built by K264 and D269. K276 is an active-site residue. Mn(2+) is bound by residues D287, D346, and E348. Residue R350 is part of the active site.

It belongs to the peptidase M17 family. The cofactor is Mn(2+).

The protein localises to the cytoplasm. It carries out the reaction Release of an N-terminal amino acid, Xaa-|-Yaa-, in which Xaa is preferably Leu, but may be other amino acids including Pro although not Arg or Lys, and Yaa may be Pro. Amino acid amides and methyl esters are also readily hydrolyzed, but rates on arylamides are exceedingly low.. The catalysed reaction is Release of an N-terminal amino acid, preferentially leucine, but not glutamic or aspartic acids.. Presumably involved in the processing and regular turnover of intracellular proteins. Catalyzes the removal of unsubstituted N-terminal amino acids from various peptides. The sequence is that of Probable cytosol aminopeptidase from Brucella anthropi (strain ATCC 49188 / DSM 6882 / CCUG 24695 / JCM 21032 / LMG 3331 / NBRC 15819 / NCTC 12168 / Alc 37) (Ochrobactrum anthropi).